Consider the following 1012-residue polypeptide: Ubiquitin-activating enzyme E1 1 (1012 aa).

Arg22 is an ATP binding site. Ser264 carries the phosphoserine modification. Residues Ala437 and Asp463 each contribute to the ATP site. Positions 465 and 468 each coordinate Mg(2+). ATP contacts are provided by Asn471, Arg474, Lys487, Val513, Asp537, and Asn538. A Mg(2+)-binding site is contributed by Asp537. Lys588 participates in a covalent cross-link: Glycyl lysine isopeptide (Lys-Gly) (interchain with G-Cter in ubiquitin). Cys593 serves as the catalytic Glycyl thioester intermediate. The residue at position 903 (Ser903) is a Phosphoserine.

The protein belongs to the ubiquitin-activating E1 family. As to quaternary structure, monomer. Interacts with the E2 ubiquitin-conjugating enzyme ubc4.

It localises to the cytoplasm. Its subcellular location is the nucleus. The enzyme catalyses ATP + ubiquitin + [E1 ubiquitin-activating enzyme]-L-cysteine = AMP + diphosphate + S-ubiquitinyl-[E1 ubiquitin-activating enzyme]-L-cysteine.. Its pathway is protein modification; protein ubiquitination. Ubiquitin transfer between the E1 ubiquitin-activating enzyme ptr3 and E2 ubiquitin-conjugating enzyme ubc4 is enhanced by the presence of magnesium and ATP, or adenylated ubiquitin. E1 ubiquitin-activating enzyme that catalyzes the first step in ubiquitin conjugation to mark cellular proteins for degradation through the ubiquitin-proteasome system. Activates ubiquitin by first adenylating its C-terminal glycine residue with ATP, and thereafter linking this residue to the side chain of a cysteine residue in E1, yielding a ubiquitin-E1 thioester and free AMP. This Schizosaccharomyces pombe (strain 972 / ATCC 24843) (Fission yeast) protein is Ubiquitin-activating enzyme E1 1 (ptr3).